We begin with the raw amino-acid sequence, 397 residues long: Tryptophan synthase beta chain (397 aa).

K87 bears the N6-(pyridoxal phosphate)lysine mark.

The protein belongs to the TrpB family. In terms of assembly, tetramer of two alpha and two beta chains. Pyridoxal 5'-phosphate serves as cofactor.

The enzyme catalyses (1S,2R)-1-C-(indol-3-yl)glycerol 3-phosphate + L-serine = D-glyceraldehyde 3-phosphate + L-tryptophan + H2O. The protein operates within amino-acid biosynthesis; L-tryptophan biosynthesis; L-tryptophan from chorismate: step 5/5. Its function is as follows. The beta subunit is responsible for the synthesis of L-tryptophan from indole and L-serine. The protein is Tryptophan synthase beta chain of Escherichia coli O45:K1 (strain S88 / ExPEC).